Reading from the N-terminus, the 368-residue chain is tRNA-specific 2-thiouridylase MnmA (368 aa).

ATP is bound by residues 11 to 18 (GMSGGVDS) and methionine 37. The interval 97-99 (NPD) is interaction with target base in tRNA. The active-site Nucleophile is cysteine 102. Residues cysteine 102 and cysteine 199 are joined by a disulfide bond. Glycine 127 contacts ATP. Positions 149-151 (KDQ) are interaction with tRNA. The active-site Cysteine persulfide intermediate is cysteine 199. Positions 311–312 (RY) are interaction with tRNA.

The protein belongs to the MnmA/TRMU family. In terms of assembly, interacts with TusE.

The protein localises to the cytoplasm. It catalyses the reaction S-sulfanyl-L-cysteinyl-[protein] + uridine(34) in tRNA + AH2 + ATP = 2-thiouridine(34) in tRNA + L-cysteinyl-[protein] + A + AMP + diphosphate + H(+). Catalyzes the 2-thiolation of uridine at the wobble position (U34) of tRNA(Lys), tRNA(Glu) and tRNA(Gln), leading to the formation of s(2)U34, the first step of tRNA-mnm(5)s(2)U34 synthesis. Sulfur is provided by IscS, via a sulfur-relay system. Binds ATP and its substrate tRNAs. The chain is tRNA-specific 2-thiouridylase MnmA from Klebsiella pneumoniae (strain 342).